Consider the following 88-residue polypeptide: MEYQYPMNEDWTTEEAVDVIAFFQQVENAYEKGADRDRLLNAYRRFKEIVPGKAEEKKICSQFEADSTYSPYRTVKQAKQSDQAIIKM.

The protein belongs to the UPF0223 family.

This chain is UPF0223 protein RBAM_014500, found in Bacillus velezensis (strain DSM 23117 / BGSC 10A6 / LMG 26770 / FZB42) (Bacillus amyloliquefaciens subsp. plantarum).